A 337-amino-acid chain; its full sequence is Glyceraldehyde-3-phosphate dehydrogenase 1, cytosolic (337 aa).

NAD(+)-binding positions include 13 to 14, Asp35, and Arg82; that span reads RI. D-glyceraldehyde 3-phosphate-binding positions include 153–155, Thr184, 213–214, and Arg236; these read SCT and TG. The active-site Nucleophile is Cys154. Position 318 (Asn318) interacts with NAD(+).

Belongs to the glyceraldehyde-3-phosphate dehydrogenase family. Homotetramer.

Its subcellular location is the cytoplasm. The catalysed reaction is D-glyceraldehyde 3-phosphate + phosphate + NAD(+) = (2R)-3-phospho-glyceroyl phosphate + NADH + H(+). It functions in the pathway carbohydrate degradation; glycolysis; pyruvate from D-glyceraldehyde 3-phosphate: step 1/5. Key enzyme in glycolysis that catalyzes the first step of the pathway by converting D-glyceraldehyde 3-phosphate (G3P) into 3-phospho-D-glyceroyl phosphate. Essential for the maintenance of cellular ATP levels and carbohydrate metabolism. This is Glyceraldehyde-3-phosphate dehydrogenase 1, cytosolic (GAPC) from Hordeum vulgare (Barley).